We begin with the raw amino-acid sequence, 253 residues long: uncharacterized protein (253 aa).

EamA domains lie at 1–97 (MFFM…IYSL) and 116–237 (FFWA…ISRL). Transmembrane regions (helical) follow at residues 2 to 22 (FFMALRFLIGGIILLPFAKQL), 28 to 48 (IFLLSIFTTLSTSFWAYGLLY), 53 to 73 (ESAVLSYTMPLIAIPLSTLIL), 80 to 100 (TEVIGILIGFSGVVIYSLNLG), 101 to 121 (IYFSLIGIVLTLINAFFWALF), 138 to 158 (AVQLLLGSLIFFTLSPIQFYF), 162 to 182 (INFLVDLLYVSVLGGGISFYL), and 214 to 234 (GVNVNIGMIEGIGVMFLGILI).

The protein belongs to the EamA transporter family.

Its subcellular location is the cell membrane. This is an uncharacterized protein from Acidianus ambivalens (Desulfurolobus ambivalens).